Consider the following 517-residue polypeptide: Serine hydroxymethyltransferase 1, mitochondrial (517 aa).

The N-terminal 30 residues, 1-30 (MAMAMALRRLSSSIDKPIRPLIRSTSCYMS), are a transit peptide targeting the mitochondrion. Lys286 is modified (N6-(pyridoxal phosphate)lysine).

It belongs to the SHMT family. Homotetramer. Interacts with GLU1. Interacts with UBP16. Requires pyridoxal 5'-phosphate as cofactor. Post-translationally, ubiquitinated. As to expression, ubiquitous. Mostly expressed in leaves, less abundant in stems, flowers and siliques, and barely detectable in roots.

The protein localises to the mitochondrion. It is found in the cytoplasm. It carries out the reaction (6R)-5,10-methylene-5,6,7,8-tetrahydrofolate + glycine + H2O = (6S)-5,6,7,8-tetrahydrofolate + L-serine. It functions in the pathway one-carbon metabolism; tetrahydrofolate interconversion. Its function is as follows. Functions in the photorespiratory pathway in catalyzing the interconversion of serine and glycine. Involved in controlling cell damage caused by abiotic stress, such as high light and salt and the hypersensitive defense response of plants. The chain is Serine hydroxymethyltransferase 1, mitochondrial from Arabidopsis thaliana (Mouse-ear cress).